The following is a 110-amino-acid chain: Inner membrane protein YgiZ (110 aa).

Over 1–8 (MLKQKIKT) the chain is Cytoplasmic. Residues 9–29 (IFEALLYIMLTYWLIDSFFAF) form a helical membrane-spanning segment. Residues 30-53 (NKYDWMLESGGNICSIPSVSGEDR) lie on the Periplasmic side of the membrane. The chain crosses the membrane as a helical span at residues 54–74 (ILQAMIAAFFLLTPLIILILR). The Cytoplasmic segment spans residues 75–83 (KLFMREMFE). A helical membrane pass occupies residues 84–104 (FWVYVFSLGICLVCGWWLFWG). Residues 105-110 (RFIFCY) lie on the Periplasmic side of the membrane.

Its subcellular location is the cell inner membrane. The protein is Inner membrane protein YgiZ (ygiZ) of Escherichia coli (strain K12).